Reading from the N-terminus, the 418-residue chain is Serine hydroxymethyltransferase (418 aa).

(6S)-5,6,7,8-tetrahydrofolate is bound by residues Leu120 and Gly124–Leu126. Lys229 bears the N6-(pyridoxal phosphate)lysine mark.

This sequence belongs to the SHMT family. Homodimer. It depends on pyridoxal 5'-phosphate as a cofactor.

It is found in the cytoplasm. It carries out the reaction (6R)-5,10-methylene-5,6,7,8-tetrahydrofolate + glycine + H2O = (6S)-5,6,7,8-tetrahydrofolate + L-serine. The protein operates within one-carbon metabolism; tetrahydrofolate interconversion. It functions in the pathway amino-acid biosynthesis; glycine biosynthesis; glycine from L-serine: step 1/1. Its function is as follows. Catalyzes the reversible interconversion of serine and glycine with tetrahydrofolate (THF) serving as the one-carbon carrier. This reaction serves as the major source of one-carbon groups required for the biosynthesis of purines, thymidylate, methionine, and other important biomolecules. Also exhibits THF-independent aldolase activity toward beta-hydroxyamino acids, producing glycine and aldehydes, via a retro-aldol mechanism. In Myxococcus xanthus (strain DK1622), this protein is Serine hydroxymethyltransferase.